The following is a 21-amino-acid chain: Peptide PGLa-B2 (21 aa).

Leu-21 bears the Leucine amide mark.

In terms of tissue distribution, expressed by the skin glands.

It is found in the secreted. Functionally, has antimicrobial activity against Gram-negative bacterium E.coli ATCC 25922 (MIC=25 uM), Gram-positive bacterium S.auerus ATCC 25923 (MIC=50 uM) and against fungus C.albicans ATCC 90028 (MIC=25 uM). Has some hemolytic activity against human erythrocytes at high concentration. The sequence is that of Peptide PGLa-B2 from Xenopus borealis (Kenyan clawed frog).